The sequence spans 549 residues: Chaperonin GroEL (549 aa).

ATP-binding positions include 30 to 33 (TLGP), Lys51, 87 to 91 (DGTTT), Gly415, 479 to 481 (NAA), and Asp495.

The protein belongs to the chaperonin (HSP60) family. Forms a cylinder of 14 subunits composed of two heptameric rings stacked back-to-back. Interacts with the co-chaperonin GroES.

The protein localises to the cytoplasm. It catalyses the reaction ATP + H2O + a folded polypeptide = ADP + phosphate + an unfolded polypeptide.. Functionally, together with its co-chaperonin GroES, plays an essential role in assisting protein folding. The GroEL-GroES system forms a nano-cage that allows encapsulation of the non-native substrate proteins and provides a physical environment optimized to promote and accelerate protein folding. The sequence is that of Chaperonin GroEL from Stenotrophomonas maltophilia (strain K279a).